The sequence spans 249 residues: Molybdate/tungstate transport system permease protein WtpB (249 aa).

Residues 1 to 5 are Cytoplasmic-facing; sequence MEKFD. Residues 6–26 traverse the membrane as a helical segment; it reads IAMTVFLVMIFLFIFLPIIYM. At 27-48 the chain is on the extracellular side; that stretch reads LSNPGDLNQLLDKEVIEAFKTT. Residues 45–240 form the ABC transmembrane type-1 domain; the sequence is FKTTLLAGAV…LISIALFALL (196 aa). Residues 49–69 form a helical membrane-spanning segment; the sequence is LLAGAVATLIALIFGIPTGYI. Residues 70-93 are Cytoplasmic-facing; the sequence is LARYDFKFKSFVEAVLDLPMAIPH. A helical membrane pass occupies residues 94–114; it reads SVIGIIILSFIYGIDIINFIG. Residues 115–116 are Extracellular-facing; that stretch reads RY. The chain crosses the membrane as a helical span at residues 117 to 137; the sequence is VVDNFWGIVTVYLFVGIPFMV. The Cytoplasmic segment spans residues 138 to 177; that stretch reads NSIRDGFLSVDEEIEYVSRTLGASKIRTFFEISLPLIKNN. Residues 178–198 form a helical membrane-spanning segment; it reads IISGIILSFARGISEVGAILI. The Extracellular segment spans residues 199-223; sequence IAYYPKTVPILIYERFMSFGLDASK. Residues 224 to 244 form a helical membrane-spanning segment; the sequence is PISVGMILISIALFALLRMFG. Topologically, residues 245 to 249 are cytoplasmic; that stretch reads RMRGR.

Belongs to the binding-protein-dependent transport system permease family. In terms of assembly, the complex is composed of two ATP-binding proteins (WtpC), two transmembrane proteins (WtpB) and a solute-binding protein (WtpA).

Its subcellular location is the cell membrane. Part of the ABC transporter complex WtpABC involved in molybdate/tungstate import. Probably responsible for the translocation of the substrate across the membrane. The polypeptide is Molybdate/tungstate transport system permease protein WtpB (wtpB) (Methanocaldococcus jannaschii (strain ATCC 43067 / DSM 2661 / JAL-1 / JCM 10045 / NBRC 100440) (Methanococcus jannaschii)).